Here is a 176-residue protein sequence, read N- to C-terminus: Prion-like protein doppel (176 aa).

The N-terminal stretch at 1–25 (MRKHLSWWWLATVCMLLFSHLSAVQ) is a signal peptide. The tract at residues 27-50 (RGIKHRIKWNRKALPSTAQITEAQ) is flexible tail. Residue Thr-43 is glycosylated (O-linked (GalNAc...) threonine). Residues 51 to 152 (VAENRPGAFI…KHCEFWLERG (102 aa)) are globular. 2 disulfides stabilise this stretch: Cys-94–Cys-145 and Cys-108–Cys-140. N-linked (GlcNAc...) asparagine glycosylation is found at Asn-98 and Asn-110. Residues 122 to 139 (KPDNKLHQQVLWRLVQEL) form a cu(2+) binding region. Residue Gly-152 is the site of GPI-anchor amidated glycine attachment. Positions 153-176 (AGLRVTMHQPVLLCLLALIWLTVK) are cleaved as a propeptide — removed in mature form.

It belongs to the prion family. In terms of processing, N-glycosylated. N-glycosylated at two distinct sites. Post-translationally, O-glycosylated. Expressed in testis, in Sertoli cells, ejaculated spermatozoa and in seminal fluid (at protein level).

It is found in the cell membrane. Functionally, required for normal acrosome reaction and for normal male fertility. Can bind Cu(2+). In Homo sapiens (Human), this protein is Prion-like protein doppel (PRND).